Reading from the N-terminus, the 238-residue chain is Phosphoribosylaminoimidazole-succinocarboxamide synthase (238 aa).

This sequence belongs to the SAICAR synthetase family.

It carries out the reaction 5-amino-1-(5-phospho-D-ribosyl)imidazole-4-carboxylate + L-aspartate + ATP = (2S)-2-[5-amino-1-(5-phospho-beta-D-ribosyl)imidazole-4-carboxamido]succinate + ADP + phosphate + 2 H(+). The protein operates within purine metabolism; IMP biosynthesis via de novo pathway; 5-amino-1-(5-phospho-D-ribosyl)imidazole-4-carboxamide from 5-amino-1-(5-phospho-D-ribosyl)imidazole-4-carboxylate: step 1/2. This chain is Phosphoribosylaminoimidazole-succinocarboxamide synthase, found in Chlorobium phaeovibrioides (strain DSM 265 / 1930) (Prosthecochloris vibrioformis (strain DSM 265)).